The following is a 947-amino-acid chain: Protein translocase subunit SecA (947 aa).

ATP-binding positions include Gln-85, 103–107, and Asp-514; that span reads GEGKT. A disordered region spans residues 864–947; sequence AAPSLDKGAQ…QAKGGRRRKK (84 aa). A compositionally biased stretch (basic and acidic residues) spans 884–900; it reads PEIRAKGLDAPQRRDLH. Residues 934–947 are compositionally biased toward basic residues; that stretch reads ERRKQAKGGRRRKK.

It belongs to the SecA family. As to quaternary structure, monomer and homodimer. Part of the essential Sec protein translocation apparatus which comprises SecA, SecYEG and auxiliary proteins SecDF. Other proteins may also be involved.

It is found in the cell membrane. The protein localises to the cytoplasm. The catalysed reaction is ATP + H2O + cellular proteinSide 1 = ADP + phosphate + cellular proteinSide 2.. Its function is as follows. Part of the Sec protein translocase complex. Interacts with the SecYEG preprotein conducting channel. Has a central role in coupling the hydrolysis of ATP to the transfer of proteins into and across the cell membrane, serving as an ATP-driven molecular motor driving the stepwise translocation of polypeptide chains across the membrane. In Streptomyces lividans, this protein is Protein translocase subunit SecA.